The primary structure comprises 447 residues: MELETTKYFILAFTHKSMSLEMREKLAINSPAILKEFLQTIKNYCPNIKECMVLSTCNRFEIYASLKHNTHADEQKNALLKILAQNKKMSVSDLEKCVLMSTDESAVHHVFSVCSSLDSLVVGETQITGQMKNAYKFAFEEKFCSKDLTRLLHFAFKCAAKVRNLTGISKQGVSISSVAVKEALSIFEKEKIEDKKALVIGLGEMSQLVIKHLLNKQFEVLVLGRNAAKFEDFLKELEEPKKVSFQNIENLNAYINAYELLFCATSSPNFIVQNCMVKETIFRRFWFDLAVPRNIEKPIFNNIFLYSVDDLEPMVRENVENRQESRMKAYEIVGLATMEFYQWIQSLEVEPLIKDLRELARISAQKELQKAVKKRYVPKEYESNIEKILHNAFNAFLHHPTIALKKNAQKEESDVLVGTIKNLFNLDKSSTNHAQNLNLYKCEYYEE.

Substrate is bound by residues 56 to 59, S119, 124 to 126, and Q130; these read TCNR and ETQ. C57 serves as the catalytic Nucleophile. An NADP(+)-binding site is contributed by 201–206; that stretch reads GLGEMS.

The protein belongs to the glutamyl-tRNA reductase family. As to quaternary structure, homodimer.

It carries out the reaction (S)-4-amino-5-oxopentanoate + tRNA(Glu) + NADP(+) = L-glutamyl-tRNA(Glu) + NADPH + H(+). The protein operates within porphyrin-containing compound metabolism; protoporphyrin-IX biosynthesis; 5-aminolevulinate from L-glutamyl-tRNA(Glu): step 1/2. Catalyzes the NADPH-dependent reduction of glutamyl-tRNA(Glu) to glutamate 1-semialdehyde (GSA). This is Glutamyl-tRNA reductase from Helicobacter acinonychis (strain Sheeba).